Consider the following 195-residue polypeptide: 7-methyl-GTP pyrophosphatase (195 aa).

D71 (proton acceptor) is an active-site residue.

The protein belongs to the Maf family. YceF subfamily. Requires a divalent metal cation as cofactor.

It localises to the cytoplasm. The enzyme catalyses N(7)-methyl-GTP + H2O = N(7)-methyl-GMP + diphosphate + H(+). In terms of biological role, nucleoside triphosphate pyrophosphatase that hydrolyzes 7-methyl-GTP (m(7)GTP). May have a dual role in cell division arrest and in preventing the incorporation of modified nucleotides into cellular nucleic acids. This chain is 7-methyl-GTP pyrophosphatase, found in Shewanella oneidensis (strain ATCC 700550 / JCM 31522 / CIP 106686 / LMG 19005 / NCIMB 14063 / MR-1).